The sequence spans 202 residues: ATP-dependent Clp protease proteolytic subunit (202 aa).

The Nucleophile role is filled by Ser-98. Residue His-123 is part of the active site.

Belongs to the peptidase S14 family. In terms of assembly, fourteen ClpP subunits assemble into 2 heptameric rings which stack back to back to give a disk-like structure with a central cavity, resembling the structure of eukaryotic proteasomes.

It localises to the cytoplasm. The enzyme catalyses Hydrolysis of proteins to small peptides in the presence of ATP and magnesium. alpha-casein is the usual test substrate. In the absence of ATP, only oligopeptides shorter than five residues are hydrolyzed (such as succinyl-Leu-Tyr-|-NHMec, and Leu-Tyr-Leu-|-Tyr-Trp, in which cleavage of the -Tyr-|-Leu- and -Tyr-|-Trp bonds also occurs).. In terms of biological role, cleaves peptides in various proteins in a process that requires ATP hydrolysis. Has a chymotrypsin-like activity. Plays a major role in the degradation of misfolded proteins. The chain is ATP-dependent Clp protease proteolytic subunit from Magnetococcus marinus (strain ATCC BAA-1437 / JCM 17883 / MC-1).